Reading from the N-terminus, the 189-residue chain is Elongation factor P (189 aa).

This sequence belongs to the elongation factor P family.

Its subcellular location is the cytoplasm. Its pathway is protein biosynthesis; polypeptide chain elongation. In terms of biological role, involved in peptide bond synthesis. Stimulates efficient translation and peptide-bond synthesis on native or reconstituted 70S ribosomes in vitro. Probably functions indirectly by altering the affinity of the ribosome for aminoacyl-tRNA, thus increasing their reactivity as acceptors for peptidyl transferase. The chain is Elongation factor P from Rhizobium johnstonii (strain DSM 114642 / LMG 32736 / 3841) (Rhizobium leguminosarum bv. viciae).